The chain runs to 367 residues: Protein RecA (367 aa).

Gly-73–Thr-80 lines the ATP pocket. Positions Asp-345–Glu-367 are disordered.

Belongs to the RecA family.

It is found in the cytoplasm. In terms of biological role, can catalyze the hydrolysis of ATP in the presence of single-stranded DNA, the ATP-dependent uptake of single-stranded DNA by duplex DNA, and the ATP-dependent hybridization of homologous single-stranded DNAs. It interacts with LexA causing its activation and leading to its autocatalytic cleavage. In Janthinobacterium sp. (strain Marseille) (Minibacterium massiliensis), this protein is Protein RecA.